Reading from the N-terminus, the 402-residue chain is Pyridinium-3,5-bisthiocarboxylic acid mononucleotide nickel insertion protein (402 aa).

Belongs to the LarC family.

The catalysed reaction is Ni(II)-pyridinium-3,5-bisthiocarboxylate mononucleotide = pyridinium-3,5-bisthiocarboxylate mononucleotide + Ni(2+). Its function is as follows. Involved in the biosynthesis of a nickel-pincer cofactor ((SCS)Ni(II) pincer complex). Binds Ni(2+), and functions in nickel delivery to pyridinium-3,5-bisthiocarboxylic acid mononucleotide (P2TMN), to form the mature cofactor. Is thus probably required for the activation of nickel-pincer cofactor-dependent enzymes. This Thermotoga sp. (strain RQ2) protein is Pyridinium-3,5-bisthiocarboxylic acid mononucleotide nickel insertion protein.